A 383-amino-acid chain; its full sequence is Protein RecA (383 aa).

ATP is bound at residue 79-86; sequence GPESSGKT. The interval 347–369 is disordered; it reads IEEDNTEEKQSSKEKETDEKADK. Positions 353–369 are enriched in basic and acidic residues; the sequence is EEKQSSKEKETDEKADK.

Belongs to the RecA family.

It is found in the cytoplasm. In terms of biological role, can catalyze the hydrolysis of ATP in the presence of single-stranded DNA, the ATP-dependent uptake of single-stranded DNA by duplex DNA, and the ATP-dependent hybridization of homologous single-stranded DNAs. It interacts with LexA causing its activation and leading to its autocatalytic cleavage. This is Protein RecA from Streptococcus mutans serotype c (strain ATCC 700610 / UA159).